The primary structure comprises 472 residues: Argininosuccinate lyase (472 aa).

It belongs to the lyase 1 family. Argininosuccinate lyase subfamily.

It is found in the cytoplasm. It carries out the reaction 2-(N(omega)-L-arginino)succinate = fumarate + L-arginine. It participates in amino-acid biosynthesis; L-arginine biosynthesis; L-arginine from L-ornithine and carbamoyl phosphate: step 3/3. This Synechococcus sp. (strain CC9605) protein is Argininosuccinate lyase.